We begin with the raw amino-acid sequence, 357 residues long: Cyclin-dependent kinase-like 1 (357 aa).

The 284-residue stretch at 4 to 287 folds into the Protein kinase domain; sequence YEKIGKIGEG…CEQLLHHPYF (284 aa). Residues 10-18 and Lys33 each bind ATP; that span reads IGEGSYGVV. The [NKR]KIAxRE motif lies at 45-51; sequence KKIALRE. Residue Asp126 is the Proton acceptor of the active site.

This sequence belongs to the protein kinase superfamily. CMGC Ser/Thr protein kinase family. CDC2/CDKX subfamily. Highly expressed in kidney, and to a lower extent in ovary.

It is found in the cytoplasm. The protein resides in the nucleus. The enzyme catalyses L-seryl-[protein] + ATP = O-phospho-L-seryl-[protein] + ADP + H(+). It catalyses the reaction L-threonyl-[protein] + ATP = O-phospho-L-threonyl-[protein] + ADP + H(+). The polypeptide is Cyclin-dependent kinase-like 1 (Homo sapiens (Human)).